The following is a 232-amino-acid chain: Two-component response regulator ORR4 (232 aa).

The Response regulatory domain maps to 11–147 (HVLAVDDSLI…DMKKLKSHLL (137 aa)). At aspartate 80 the chain carries 4-aspartylphosphate. Disordered stretches follow at residues 153–174 (LPMA…AASA) and 202–232 (AAAM…AVET). Polar residues predominate over residues 209–232 (VISSPDQRTKPRLSSTSSGLAVET).

Belongs to the ARR family. Type-A subfamily. Two-component system major event consists of a His-to-Asp phosphorelay between a sensor histidine kinase (HK) and a response regulator (RR). In plants, the His-to-Asp phosphorelay involves an additional intermediate named Histidine-containing phosphotransfer protein (HPt). This multistep phosphorelay consists of a His-Asp-His-Asp sequential transfer of a phosphate group between first a His and an Asp of the HK protein, followed by the transfer to a conserved His of the HPt protein and finally the transfer to an Asp in the receiver domain of the RR protein. As to expression, expressed in mature leaves and flowers, and at low levels in roots and shoots.

Its function is as follows. Functions as a response regulator involved in His-to-Asp phosphorelay signal transduction system. Phosphorylation of the Asp residue in the receiver domain activates the ability of the protein to promote the transcription of target genes. Type-A response regulators seem to act as negative regulators of the cytokinin signaling. This chain is Two-component response regulator ORR4, found in Oryza sativa subsp. indica (Rice).